The following is a 423-amino-acid chain: UPF0229 protein VV2350 (423 aa).

Positions 81 to 111 (QFITGDKIERPKGGQGGGGAGDGDASADGEG) are disordered. Positions 93 to 102 (GGQGGGGAGD) are enriched in gly residues.

The protein belongs to the UPF0229 family.

This Vibrio vulnificus (strain YJ016) protein is UPF0229 protein VV2350.